The primary structure comprises 2145 residues: Adenylate cyclase (2145 aa).

Disordered regions lie at residues 1 to 115, 127 to 236, 266 to 307, and 329 to 547; these read MPRN…RMSD, DPAG…SGAR, GKEH…PVPK, and VRDI…GPTD. Low complexity-rich tracts occupy residues 7 to 23, 35 to 68, and 89 to 107; these read SSRFSSMTGSSTDSARS, PSASSSSPFAASSNQTSNASRSASHGSRRAAPSR, and SPTSTSPCVSPSSITSSNS. 2 stretches are compositionally biased toward polar residues: residues 134-148 and 159-205; these read SRTQQNNPSSGSLSQ and PASS…TESP. A compositionally biased stretch (low complexity) spans 217–234; it reads SIASITTTASSQGSRASG. Residues 269–281 show a composition bias toward basic residues; the sequence is HRSHSYSHARPHR. The span at 343–357 shows a compositional bias: polar residues; sequence NDSSQQNNPPKTSGS. A compositionally biased stretch (basic and acidic residues) spans 377-403; sequence KSNEDPRSLRPTVSREDSTISVPKDRN. The span at 404 to 441 shows a compositional bias: polar residues; sequence GSSTMYGTRSRAQSPAPSTTGSYWGHKSGSTDGQTSPG. Composition is skewed to basic and acidic residues over residues 454-466 and 495-511; these read RLKEKDDAPDLKK and ADGKYQPDVRDGIRPDL. Positions 637–727 constitute a Ras-associating domain; sequence HNYCIRVFRA…IEDIGREDNS (91 aa). LRR repeat units follow at residues 779–800, 803–824, 826–847, 850–871, 873–894, 896–917, 919–941, 943–964, 965–986, 987–1006, 1007–1028, 1030–1051, 1053–1074, 1076–1097, and 1099–1120; these read EIISLNLSRNLSLQVPRDFISV, NLRDIKFNNNEARALPKSFGYA, RLTMLDASNNRLESLESAALHN, GLLKLNLANNKLKQLPREFEAF, VLRTLNISSNLLNNFPPFLAKL, NLVDLDLSFNTIQSLPDNVGQM, SLERLVITNNELSGSLPPSFKNL, SLRELDIKYNAISNIDVISQLP, KLEILSATRNNISQFSGTFERV, RSIKLNWNPITKFEIKAPVP, TLKALNLSNAQLASIDESFHNM, NLERLELDKNYFVSLPAHIGNL, RLEYFSIAHNSVGELPPEIGCL, ELKRLDVRGNNIRKLPMELWWA, and KLDYLNASSNVLENFPKPASRA. The interval 1114-1226 is disordered; sequence PKPASRAPHP…SSRKDSSHTQ (113 aa). Composition is skewed to low complexity over residues 1160–1179 and 1201–1217; these read RPSQASSSLLSVGPSPVPGG and SRSTTQSSTALATPTAS. LRR repeat units follow at residues 1235-1255, 1259-1280, 1283-1304, 1307-1328, 1330-1352, and 1359-1380; these read SLRYLYMADNQLDDDCFDQLC, NLRVLNLSYNDLSDMPQRSIKS, QLVELYLSGNELASLPADDLEE, MLQTLHINGNKFTNLPADISRA, KLTVFDCGSNSLKYNIANVPYDW, and NLRYLNLSGNRRLEIKQSSVPT. The 278-residue stretch at 1432–1709 folds into the PPM-type phosphatase domain; sequence PYGMADTLGS…NKMTVQMLGV (278 aa). The interval 1718 to 1760 is disordered; sequence RSRQHKGQSMPVYASLQDDGGSSTGMRRARKARDGPLDSTLGR. One can recognise a Guanylate cyclase domain in the interval 1773–1910; it reads AIVFTDIKNS…PMVNKASRIS (138 aa). Mg(2+)-binding residues include D1778 and D1821.

This sequence belongs to the adenylyl cyclase class-3 family. Mg(2+) serves as cofactor.

It catalyses the reaction ATP = 3',5'-cyclic AMP + diphosphate. Plays essential roles in regulation of cellular metabolism by catalyzing the synthesis of a second messenger, cAMP. This chain is Adenylate cyclase, found in Podospora anserina (Pleurage anserina).